The chain runs to 498 residues: MELKDQIKEENEQIAQRKLKLKKRREEGQAYPNDFKRDSLAADLHAVYDQFDSGALTAKAIRVKMAGRMMTRRIMGKASFAHIQDMKGRMQIYVTRDSLPQGVYSDFKSWDLGDIVGIEGELFKTKTEELSVKVDQIRLLTKALRPMPDKFHGLHDQEQRFRQRYLDLIVNESSRHLFQTRSQVIAQIRRFLDDRGYIEVETPMMHPLPGGAAARPFETHHNAMNMDLFLRIAPELYLKRLVVGGFEKVYEINRNFRNEGISTRHNPEFTMLEFYQAYATYEDMMMLTESMIRHLAEKIFGVMEIKYQGVRIDLNKPFPRLSLRDAILQFNPGITPDQIDHLETARELAHKYEIATPAHYGLGKIQTELFEKLVEEKLQQPIFITHFPKEVSPLSRANEENDFITDRFEFYVGGREIANGFSELNDPEDQAARFREQLKARNAGDLEAMSFDEDYITALEYGLPPTAGEGIGIDRLVMLFTDNASIRDVILFPLLRSK.

Glutamate 409 and glutamate 416 together coordinate Mg(2+).

It belongs to the class-II aminoacyl-tRNA synthetase family. Homodimer. Requires Mg(2+) as cofactor.

The protein localises to the cytoplasm. The catalysed reaction is tRNA(Lys) + L-lysine + ATP = L-lysyl-tRNA(Lys) + AMP + diphosphate. The polypeptide is Lysine--tRNA ligase (Coxiella burnetii (strain CbuK_Q154) (Coxiella burnetii (strain Q154))).